The chain runs to 256 residues: H-2 class II histocompatibility antigen, A-B alpha chain (256 aa).

Positions 1–23 (MPRSRALILGVLALTTMLSLCGG) are cleaved as a signal peptide. The segment at 24-111 (EDDIEADHVG…KRSNSTPATN (88 aa)) is alpha-1. At 24-218 (EDDIEADHVG…IPAPMSELTE (195 aa)) the chain is on the extracellular side. Positions 112 to 205 (EAPQATVFPK…GLEEPVLKHW (94 aa)) are alpha-2. The Ig-like C1-type domain occupies 114-206 (PQATVFPKSP…LEEPVLKHWE (93 aa)). Cys-134 and Cys-190 are joined by a disulfide. N-linked (GlcNAc...) asparagine glycosylation occurs at Asn-145. Residues 206–218 (EPEIPAPMSELTE) form a connecting peptide region. Residues 219–244 (TVVCALGLSVGLVGIVVGTIFIIQGL) traverse the membrane as a helical segment. The Cytoplasmic portion of the chain corresponds to 245-256 (RSGGTSRHPGPL).

It belongs to the MHC class II family.

It localises to the membrane. This Mus musculus (Mouse) protein is H-2 class II histocompatibility antigen, A-B alpha chain (H2-Aa).